A 215-amino-acid polypeptide reads, in one-letter code: Proapoptotic nucleolar protein 1 (215 aa).

Residues 35–215 are disordered; that stretch reads RKGTPTARCL…RLPAPRSAST (181 aa). A compositionally biased stretch (pro residues) spans 169-180; it reads PRPPQHLSPPQP. A necessary for nucleolar localization region spans residues 185 to 215; sequence MGAAEGSRRADTHHARRRRRARLPAPRSAST.

Widely expressed.

The protein resides in the nucleus. The protein localises to the nucleolus. Functionally, apoptosis-inducing protein that modulates the tumor suppressor function of CDKN2A/p14ARF. Enhances the stability of CDKN2A/p14ARF protein by protecting it from degradation. May act as a tumor suppressor. The chain is Proapoptotic nucleolar protein 1 from Homo sapiens (Human).